Here is a 358-residue protein sequence, read N- to C-terminus: MPAVLSSVLSNITDFVVHEGNGVKGLADMGLEALPKQYVQPEEERITTSTVIVDDTIPVIDLSEWGSDPKVGDMNCEAAEKWGFFQIVNHGVPLEVLEEVKAATYRFFRLPAEEKNKHSKDNSPSNNVRYGTSFTPHAEKALEWKDFLSLFYVSDEEAAALWPSACRDEALTFMRNCDAVIKRLLKSLMKGLNVTEIDGTKESLLMGSKRINMNYYPKCPNPELTVGVGRHSDVSTLTILLQDQIGGLYVRKLDSDEWVHVPPINGAIVINVGDALQILSNGRYKSIEHRVIANGSNNRISVPIFVNPRPNDVIGPLPELLESGEKAVYKNVLYSDYVKHFFRKAHDGKETVDFAKIN.

A Fe2OG dioxygenase domain is found at 200 to 308; it reads TKESLLMGSK…RISVPIFVNP (109 aa). Tyrosine 216 lines the 2-oxoglutarate pocket. Histidine 231, aspartate 233, and histidine 289 together coordinate Fe cation. 2 residues coordinate 2-oxoglutarate: arginine 299 and serine 301.

This sequence belongs to the iron/ascorbate-dependent oxidoreductase family. It depends on L-ascorbate as a cofactor. Requires Fe(2+) as cofactor.

It catalyses the reaction (E)-feruloyl-CoA + 2-oxoglutarate + O2 = (E)-6-hydroxyferuloyl-CoA + succinate + CO2. Its pathway is phenylpropanoid metabolism. Its function is as follows. 2-oxoglutarate (OG)- and Fe(II)-dependent dioxygenase (2OGD) involved in scopoletin biosynthesis. Converts feruloyl CoA into 6'-hydroxyferuloyl CoA. The chain is Feruloyl CoA ortho-hydroxylase F6H1-1 from Ipomoea batatas (Sweet potato).